The chain runs to 453 residues: Exopolyphosphatase PRUNE1 (453 aa).

Residue methionine 1 is modified to N-acetylmethionine. The Mn(2+) site is built by aspartate 28, aspartate 30, aspartate 106, and aspartate 179. The DHH motif motif lies at 106 to 108; the sequence is DHH. The segment at 393–420 is essential for homodimerization; it reads SLISGLSQDEEDPPLPPTPMNSLVDECP. The segment at 395-421 is disordered; the sequence is ISGLSQDEEDPPLPPTPMNSLVDECPL. The residue at position 399 (serine 399) is a Phosphoserine. Threonine 410 is modified (phosphothreonine). Position 414 is a phosphoserine (serine 414).

The protein belongs to the PPase class C family. Prune subfamily. In terms of assembly, homooligomer. Able to homodimerize via its C-terminal domain. Interacts with NME1. Interacts with GSK3; at focal adhesion complexes where paxillin and vinculin are colocalized. Interacts with alpha and beta tubulin. Mn(2+) serves as cofactor. As to expression, ubiquitously expressed. Seems to be overexpressed in aggressive sarcoma subtypes, such as leiomyosarcomas and malignant fibrous histiocytomas (MFH) as well as in the less malignant liposarcomas.

It is found in the cytoplasm. The protein localises to the nucleus. Its subcellular location is the cell junction. It localises to the focal adhesion. The catalysed reaction is diphosphate + H2O = 2 phosphate + H(+). With respect to regulation, activated by magnesium ions and inhibited by manganese ions. Inhibited by dipyridamole, moderately sensitive to IBMX and inhibited by vinpocetine. Functionally, phosphodiesterase (PDE) that has higher activity toward cAMP than cGMP, as substrate. Plays a role in cell proliferation, migration and differentiation, and acts as a negative regulator of NME1. Plays a role in the regulation of neurogenesis. Involved in the regulation of microtubule polymerization. The chain is Exopolyphosphatase PRUNE1 from Homo sapiens (Human).